A 247-amino-acid polypeptide reads, in one-letter code: ATP synthase subunit a, chloroplastic (247 aa).

5 helical membrane passes run 38–58 (QVLI…FIAV), 95–115 (VPFI…GALL), 134–154 (INTT…AGLS), 199–219 (LVVV…VMFL), and 220–240 (GLFT…AYIG).

It belongs to the ATPase A chain family. As to quaternary structure, F-type ATPases have 2 components, CF(1) - the catalytic core - and CF(0) - the membrane proton channel. CF(1) has five subunits: alpha(3), beta(3), gamma(1), delta(1), epsilon(1). CF(0) has four main subunits: a, b, b' and c.

It localises to the plastid. It is found in the chloroplast thylakoid membrane. In terms of biological role, key component of the proton channel; it plays a direct role in the translocation of protons across the membrane. The polypeptide is ATP synthase subunit a, chloroplastic (Citrus sinensis (Sweet orange)).